The sequence spans 979 residues: Oncostatin-M-specific receptor subunit beta (979 aa).

The signal sequence occupies residues 1–27 (MALFAVFQTTFFLTLLSLRTYQSEVLA). Residues 28–740 (ERLPLTPVSL…VTTPDEHSSM (713 aa)) lie on the Extracellular side of the membrane. N-linked (GlcNAc...) asparagine glycosylation occurs at Asn163. A disulfide bond links Cys245 and Cys255. Residues Asn326 and Asn380 are each glycosylated (N-linked (GlcNAc...) asparagine). Fibronectin type-III domains lie at 335 to 428 (NPFS…TLEA), 433 to 528 (APDV…DPEN), 529 to 623 (KEVE…SQEL), and 625 to 736 (PSDN…TPDE). A WSXWS motif motif is present at residues 415 to 419 (WSEWS). N-linked (GlcNAc...) asparagine glycans are attached at residues Asn446 and Asn580. Residues 741-761 (LIHILLPMVFCVLLIMVMCYL) traverse the membrane as a helical segment. Topologically, residues 762-979 (KSQWIKETCY…TLLDPGEHYC (218 aa)) are cytoplasmic. The Box 1 motif motif lies at 770-778 (CYPDIPDPY). Ser826 and Ser889 each carry phosphoserine.

It belongs to the type I cytokine receptor family. Type 2 subfamily. Heterodimer composed of OSMR and IL6ST (type II OSM receptor). Heterodimer with IL31RA to form the IL31 receptor. Expressed in keratinocytes (at protein level). Expressed at relatively high levels in all neural cells as well as fibroblast and epithelial cells.

It is found in the membrane. Functionally, associates with IL31RA to form the IL31 receptor. Binds IL31 to activate STAT3 and possibly STAT1 and STAT5. Capable of transducing OSM-specific signaling events. In Homo sapiens (Human), this protein is Oncostatin-M-specific receptor subunit beta (OSMR).